A 330-amino-acid chain; its full sequence is Cytosolic iron-sulfur protein assembly protein 1 (330 aa).

WD repeat units follow at residues 12–53 (LYKE…DVLD), 56–95 (AHKK…DRTF), 105–144 (GHEN…EEYE), 151–190 (EHSQ…WECV), 195–236 (GHEG…EDDQ), 248–286 (VHKR…WKVF), and 292–330 (CHGV…EKAA).

This sequence belongs to the WD repeat CIA1 family. In terms of assembly, interacts with NAR1.

The protein resides in the cytoplasm. The protein localises to the nucleus. Functionally, essential component of the cytosolic iron-sulfur (Fe/S) protein assembly machinery. Required for the maturation of extramitochondrial Fe/S proteins. This chain is Cytosolic iron-sulfur protein assembly protein 1, found in Saccharomyces cerevisiae (strain ATCC 204508 / S288c) (Baker's yeast).